A 741-amino-acid chain; its full sequence is Beta-galactosidase 10 (741 aa).

Residues 1–29 (MNRVTTESIASTAILVVMVFLFSWRSIEA) form the signal peptide. N-linked (GlcNAc...) asparagine glycosylation occurs at N31. The active-site Proton donor is the E188. The active-site Nucleophile is the E257. N358, N396, N469, N525, and N583 each carry an N-linked (GlcNAc...) asparagine glycan.

It belongs to the glycosyl hydrolase 35 family. Ubiquitous.

It localises to the secreted. It is found in the extracellular space. Its subcellular location is the apoplast. The catalysed reaction is Hydrolysis of terminal non-reducing beta-D-galactose residues in beta-D-galactosides.. The chain is Beta-galactosidase 10 (BGAL10) from Arabidopsis thaliana (Mouse-ear cress).